The chain runs to 86 residues: YcgL domain-containing protein XCV4171 (86 aa).

The region spanning 1–83 (MHAYVYKSQR…PKTIVLAGEC (83 aa)) is the YcgL domain.

In Xanthomonas euvesicatoria pv. vesicatoria (strain 85-10) (Xanthomonas campestris pv. vesicatoria), this protein is YcgL domain-containing protein XCV4171.